Consider the following 388-residue polypeptide: 3beta-hydroxysteroid dehydrogenase dhs-16 (388 aa).

Residues 2 to 22 form a helical membrane-spanning segment; that stretch reads LELIYILPLLCFVYFLFRRFV. Tyrosine 188 functions as the Proton acceptor in the catalytic mechanism. A run of 2 helical transmembrane segments spans residues 300–320 and 346–366; these read AIFMFIPLSIFPTALQDWILA and IQWIQFLSQIAIIPLLYTIFF.

Belongs to the short-chain dehydrogenases/reductases (SDR) family. In terms of tissue distribution, strongly expressed in the hypodermis and posterior pharyngeal bulb and in a number of unidentified neurons of the head and tail.

The protein localises to the membrane. It catalyses the reaction lathosterol + NAD(+) = 5alpha-cholest-7-en-3-one + NADH + H(+). Its pathway is steroid hormone biosynthesis; dafachronic acid biosynthesis. 3beta-hydroxysteroid dehydrogenase that converts 3beta-hydroxysteroids to 3-ketosteroids, an essential step in the production of dafachronic acids from cholesterol. Catalyzes the dehydrogenation of lathosterol (5alpha-cholest-7-en-3beta-ol) to lathosterone (5alpha-cholest-7-en-3-one), a step required for maximal biosynthesis of Delta(7)-dafachronic acid. Dafachronic acids act as ligands and bind directly to the nuclear hormone receptor (NHR) daf-12, suppressing dauer formation and inducing reproductive growth, they can also regulate C.elegans lifespan. The chain is 3beta-hydroxysteroid dehydrogenase dhs-16 (dhs-16) from Caenorhabditis elegans.